A 747-amino-acid polypeptide reads, in one-letter code: MTSWADIQKLASDLQRVQLTQSSKKLSEVNCIEVLQKLIASQQIDVVYTRDGHTYVTKKHLETEIKNECVAAGGRAPLTDIAVALNIDFDHIERTARLIVSSDDEFTLSNAELFATGYSLCRTKISISVNTCIASATNFALFSMNKSLLIEKLSSTDFEGVVDGDTIYTSSFLDARQLVLRAVLVALTKVTPISTIQKRVGLTPKRFWIAFENLQALGEVPGTLIGSRTSPACSYRPKMYDYLVKTCVTNQYRQNEFLQMSTLKTLGLDSKTALEEVLGASEVKKLVNLNSIYMSKELMEQCVQTVQGEARNITLNTDYIVFVPDDIQNSGIAEIRMSLQTLNLPLDTADEDLIGEKIASTEKDTNFSDGFVYNNSILTEALKSINTQIEAKAHQEVEKIDVEKKKQCGSKAPAKVQEDTDDWGDNKKGGKGGKKGGKGGKNGGGGGKGATSSVPTGSGTVQVNSEELEEWLRESQTVPEEILTVVVETLHQDATSALRKQVQEIQALQLVVNAANSKKSLSAIGDKCRQLYDSFNTFEAGTTSFADPLGTDLRQYLLKTVGVDLACAILSYAIGIDNVHQLKEKQRDETIESLPEMVREPIRALFASLKSTDEDAVEKFHDAVYDCSVPSATSLSLRKIDKKGRAEVGVKVSADLCDQLASQSDPATTLLLSVLYLFSQAGRPTTASGKFVAQLIAQMKDFCPTNTFELLQSCQKGVVTCIKNQDDDVAKEILSEDIEKLKSAVLQ.

Residues E403 to L468 form a disordered region. The span at G429 to K438 shows a compositional bias: basic residues. Gly residues predominate over residues G439–G449. Polar residues predominate over residues A450–S465.

This sequence belongs to the UFL1 family.

In terms of biological role, E3 UFM1-protein ligase that mediates ufmylation of target proteins. The protein is E3 UFM1-protein ligase 1 homolog (ufl-1) of Caenorhabditis briggsae.